The following is a 430-amino-acid chain: Serine--tRNA ligase (430 aa).

237 to 239 (TAE) provides a ligand contact to L-serine. 268-270 (RSE) lines the ATP pocket. E291 is an L-serine binding site. Residue 355–358 (EISS) participates in ATP binding. Residue S391 coordinates L-serine.

This sequence belongs to the class-II aminoacyl-tRNA synthetase family. Type-1 seryl-tRNA synthetase subfamily. Homodimer. The tRNA molecule binds across the dimer.

Its subcellular location is the cytoplasm. It carries out the reaction tRNA(Ser) + L-serine + ATP = L-seryl-tRNA(Ser) + AMP + diphosphate + H(+). It catalyses the reaction tRNA(Sec) + L-serine + ATP = L-seryl-tRNA(Sec) + AMP + diphosphate + H(+). The protein operates within aminoacyl-tRNA biosynthesis; selenocysteinyl-tRNA(Sec) biosynthesis; L-seryl-tRNA(Sec) from L-serine and tRNA(Sec): step 1/1. Its function is as follows. Catalyzes the attachment of serine to tRNA(Ser). Is also able to aminoacylate tRNA(Sec) with serine, to form the misacylated tRNA L-seryl-tRNA(Sec), which will be further converted into selenocysteinyl-tRNA(Sec). The polypeptide is Serine--tRNA ligase (Citrobacter koseri (strain ATCC BAA-895 / CDC 4225-83 / SGSC4696)).